A 707-amino-acid polypeptide reads, in one-letter code: Protein O-mannosyl-transferase TMEM260 (707 aa).

8 helical membrane-spanning segments follow: residues 28–48 (GGVAVFAAVAAVFTFTLPPSV), 71–91 (YPLFTLVAKLAITLFPFGSIA), 94–114 (VNLLCGLFGAVAASLLFFTVF), 141–161 (IAAEVFSLNNLFVGLLMALTV), 189–209 (NQHTIILYVLCIIPWILFQLL), 222–242 (LSLYFSAGLLPYVHLPISSYL), 318–338 (NPSLVWLFTGMFCIYSLFFAW), and 356–376 (FWMQSNAVVAVLAGIGLAAVV). The Lumenal portion of the chain corresponds to 377-707 (SETNRVLNSN…LQSLRNRKNV (331 aa)). Residues asparagine 407, asparagine 535, and asparagine 568 are each glycosylated (N-linked (GlcNAc...) asparagine).

The protein belongs to the glycosyltransferase 117 (GT117) family. Expressed in brain, heart, kidney, liver, lung, pancreas and placenta but are not detected in skeletal muscle.

The protein resides in the endoplasmic reticulum membrane. The protein localises to the membrane. The catalysed reaction is a di-trans,poly-cis-dolichyl beta-D-mannosyl phosphate + L-seryl-[protein] = 3-O-(alpha-D-mannosyl)-L-seryl-[protein] + a di-trans,poly-cis-dolichyl phosphate + H(+). It carries out the reaction a di-trans,poly-cis-dolichyl beta-D-mannosyl phosphate + L-threonyl-[protein] = 3-O-(alpha-D-mannosyl)-L-threonyl-[protein] + a di-trans,poly-cis-dolichyl phosphate + H(+). Its function is as follows. O-mannosyl-transferase that transfers mannosyl residues to the hydroxyl group of serine or threonine residues of proteins. Specifically glycosylates the IPT/TIG domain of target proteins, such as MET and MST1R/RON. TMEM260-mediated O-mannosylated residues are composed of single mannose glycans that are not elongated or modified. The chain is Protein O-mannosyl-transferase TMEM260 from Homo sapiens (Human).